The following is a 481-amino-acid chain: Cytochrome c oxidase subunit 1 (481 aa).

Residues Ile-22–Ile-42 traverse the membrane as a helical segment. Glu-45 and Gly-50 together coordinate Ca(2+). 8 helical membrane passes run Leu-64 to Gly-84, Ser-109 to Gly-129, Phe-151 to Ile-171, Ile-194 to Met-214, Leu-240 to Ile-260, Met-278 to Val-298, Tyr-309 to Val-329, and Leu-343 to Val-363. His-69 lines the Fe(II)-heme a pocket. His-246 lines the Cu cation pocket. The segment at residues His-246–Tyr-250 is a cross-link (1'-histidyl-3'-tyrosine (His-Tyr)). O2 is bound at residue Tyr-250. His-374 and Asp-375 together coordinate Mg(2+). His-382 provides a ligand contact to heme a3. Helical transmembrane passes span His-382 to Ile-402 and Ile-420 to Phe-440. His-384 contributes to the Fe(II)-heme a binding site. Pro-448 is a binding site for Ca(2+). Residues Phe-459–Ile-479 traverse the membrane as a helical segment.

This sequence belongs to the heme-copper respiratory oxidase family. As to quaternary structure, component of the cytochrome c oxidase (complex IV, CIV), a multisubunit enzyme composed of a catalytic core of 3 subunits and several supernumerary subunits. The complex exists as a monomer or a dimer and forms supercomplexes (SCs) in the inner mitochondrial membrane with ubiquinol-cytochrome c oxidoreductase (cytochrome b-c1 complex, complex III, CIII). Requires heme as cofactor. It depends on Cu cation as a cofactor.

It is found in the mitochondrion inner membrane. It carries out the reaction 4 Fe(II)-[cytochrome c] + O2 + 8 H(+)(in) = 4 Fe(III)-[cytochrome c] + 2 H2O + 4 H(+)(out). It participates in energy metabolism; oxidative phosphorylation. Functionally, component of the cytochrome c oxidase, the last enzyme in the mitochondrial electron transport chain which drives oxidative phosphorylation. The respiratory chain contains 3 multisubunit complexes succinate dehydrogenase (complex II, CII), ubiquinol-cytochrome c oxidoreductase (cytochrome b-c1 complex, complex III, CIII) and cytochrome c oxidase (complex IV, CIV), that cooperate to transfer electrons derived from NADH and succinate to molecular oxygen, creating an electrochemical gradient over the inner membrane that drives transmembrane transport and the ATP synthase. Cytochrome c oxidase is the component of the respiratory chain that catalyzes the reduction of oxygen to water. Electrons originating from reduced cytochrome c in the intermembrane space (IMS) are transferred via the dinuclear copper A center (CU(A)) of subunit 2 and heme A of subunit 1 to the active site in subunit 1, a binuclear center (BNC) formed by heme A3 and copper B (CU(B)). The BNC reduces molecular oxygen to 2 water molecules using 4 electrons from cytochrome c in the IMS and 4 protons from the mitochondrial matrix. The sequence is that of Cytochrome c oxidase subunit 1 (MT-CO1) from Theileria parva (East coast fever infection agent).